The chain runs to 129 residues: Small ribosomal subunit protein uS11 (129 aa).

This sequence belongs to the universal ribosomal protein uS11 family. In terms of assembly, part of the 30S ribosomal subunit. Interacts with proteins S7 and S18. Binds to IF-3.

In terms of biological role, located on the platform of the 30S subunit, it bridges several disparate RNA helices of the 16S rRNA. Forms part of the Shine-Dalgarno cleft in the 70S ribosome. The polypeptide is Small ribosomal subunit protein uS11 (Erwinia tasmaniensis (strain DSM 17950 / CFBP 7177 / CIP 109463 / NCPPB 4357 / Et1/99)).